Here is a 338-residue protein sequence, read N- to C-terminus: Probable tRNA pseudouridine synthase B (338 aa).

Residue Asp80 is the Nucleophile of the active site. Residues Leu247–Met322 form the PUA domain.

Belongs to the pseudouridine synthase TruB family. Type 2 subfamily.

It carries out the reaction uridine(55) in tRNA = pseudouridine(55) in tRNA. Its function is as follows. Could be responsible for synthesis of pseudouridine from uracil-55 in the psi GC loop of transfer RNAs. The sequence is that of Probable tRNA pseudouridine synthase B from Methanopyrus kandleri (strain AV19 / DSM 6324 / JCM 9639 / NBRC 100938).